Reading from the N-terminus, the 838-residue chain is Protein translocase subunit SecA (838 aa).

ATP is bound by residues Gln-86, 104–108, and Asp-493; that span reads GEGKT. Disordered regions lie at residues 517–536 and 789–838; these read RRIDNQLRGRSGRQGDPGSS and KVAE…CCGQ. The segment covering 801–819 has biased composition (basic and acidic residues); the sequence is TDGDSKAKRQPVRKKETVG. Residues Cys-824, Cys-826, Cys-835, and Cys-836 each coordinate Zn(2+).

It belongs to the SecA family. In terms of assembly, monomer and homodimer. Part of the essential Sec protein translocation apparatus which comprises SecA, SecYEG and auxiliary proteins SecDF. Other proteins may also be involved. Zn(2+) serves as cofactor.

It is found in the cell membrane. The protein resides in the cytoplasm. The catalysed reaction is ATP + H2O + cellular proteinSide 1 = ADP + phosphate + cellular proteinSide 2.. Its function is as follows. Part of the Sec protein translocase complex. Interacts with the SecYEG preprotein conducting channel. Has a central role in coupling the hydrolysis of ATP to the transfer of proteins into and across the cell membrane, serving as an ATP-driven molecular motor driving the stepwise translocation of polypeptide chains across the membrane. The protein is Protein translocase subunit SecA of Halalkalibacterium halodurans (strain ATCC BAA-125 / DSM 18197 / FERM 7344 / JCM 9153 / C-125) (Bacillus halodurans).